A 1052-amino-acid polypeptide reads, in one-letter code: Mediator of RNA polymerase II transcription subunit 5 (1052 aa).

A disordered region spans residues 949 to 982; it reads GGDDEQREQHQQQQPDADQSNQGVVAPTGNTPGN. Residues 959–970 are compositionally biased toward low complexity; sequence QQQQPDADQSNQ.

This sequence belongs to the Mediator complex subunit 5 family. Component of the Mediator complex.

The protein localises to the nucleus. Component of the Mediator complex, a coactivator involved in the regulated transcription of nearly all RNA polymerase II-dependent genes. Mediator functions as a bridge to convey information from gene-specific regulatory proteins to the basal RNA polymerase II transcription machinery. Mediator is recruited to promoters by direct interactions with regulatory proteins and serves as a scaffold for the assembly of a functional preinitiation complex with RNA polymerase II and the general transcription factors. This chain is Mediator of RNA polymerase II transcription subunit 5 (NUT1), found in Coccidioides immitis (strain RS) (Valley fever fungus).